Consider the following 830-residue polypeptide: DNA-directed RNA polymerase subunit beta'' (830 aa).

Residues C219, C291, C298, and C301 each contribute to the Zn(2+) site.

Belongs to the RNA polymerase beta' chain family. RpoC2 subfamily. In plastids the minimal PEP RNA polymerase catalytic core is composed of four subunits: alpha, beta, beta', and beta''. When a (nuclear-encoded) sigma factor is associated with the core the holoenzyme is formed, which can initiate transcription. The cofactor is Zn(2+).

The protein resides in the plastid. It localises to the chloroplast. It carries out the reaction RNA(n) + a ribonucleoside 5'-triphosphate = RNA(n+1) + diphosphate. Functionally, DNA-dependent RNA polymerase catalyzes the transcription of DNA into RNA using the four ribonucleoside triphosphates as substrates. In Euglena gracilis, this protein is DNA-directed RNA polymerase subunit beta'' (rpoC2).